Reading from the N-terminus, the 204-residue chain is Recombination protein RecR (204 aa).

A C4-type zinc finger spans residues 58-75 (CSVCQNITDLGVDPCHIC). Positions 83-181 (SVICVVESPT…NVTRIARGIP (99 aa)) constitute a Toprim domain.

It belongs to the RecR family.

May play a role in DNA repair. It seems to be involved in an RecBC-independent recombinational process of DNA repair. It may act with RecF and RecO. This Chlorobaculum tepidum (strain ATCC 49652 / DSM 12025 / NBRC 103806 / TLS) (Chlorobium tepidum) protein is Recombination protein RecR.